We begin with the raw amino-acid sequence, 116 residues long: Large ribosomal subunit protein uL18 (116 aa).

It belongs to the universal ribosomal protein uL18 family. In terms of assembly, part of the 50S ribosomal subunit; part of the 5S rRNA/L5/L18/L25 subcomplex. Contacts the 5S and 23S rRNAs.

This is one of the proteins that bind and probably mediate the attachment of the 5S RNA into the large ribosomal subunit, where it forms part of the central protuberance. The sequence is that of Large ribosomal subunit protein uL18 from Shewanella halifaxensis (strain HAW-EB4).